A 145-amino-acid chain; its full sequence is Putative antiporter subunit mnhG2 (145 aa).

Helical transmembrane passes span 11–31 (IAAVMLLLGSFIALISAIGIV), 51–71 (VLLTLIGVLIYFIVNTGFFSV), and 72–92 (RLLLSLVFINLTSPVGMHLVA).

This sequence belongs to the CPA3 antiporters (TC 2.A.63) subunit G family. May form a heterooligomeric complex that consists of seven subunits: mnhA2, mnhB2, mnhC2, mnhD2, mnhE2, mnhF2 and mnhG2.

It localises to the cell membrane. The polypeptide is Putative antiporter subunit mnhG2 (mnhG2) (Staphylococcus aureus (strain JH9)).